Here is a 1057-residue protein sequence, read N- to C-terminus: Probable E3 ubiquitin-protein ligase HERC4 (1057 aa).

RCC1 repeat units lie at residues methionine 1–aspartate 51, aspartate 52–aspartate 101, lysine 102–lysine 154, serine 156–leucine 207, serine 208–lysine 259, glycine 261–proline 311, and serine 313–phenylalanine 368. The region spanning lysine 730–isoleucine 1057 is the HECT domain. Cysteine 1025 functions as the Glycyl thioester intermediate in the catalytic mechanism.

Expressed in brain and testis and detected in heart and placenta.

It is found in the cytoplasm. Its subcellular location is the cytosol. The enzyme catalyses S-ubiquitinyl-[E2 ubiquitin-conjugating enzyme]-L-cysteine + [acceptor protein]-L-lysine = [E2 ubiquitin-conjugating enzyme]-L-cysteine + N(6)-ubiquitinyl-[acceptor protein]-L-lysine.. It participates in protein modification; protein ubiquitination. In terms of biological role, probable E3 ubiquitin-protein ligase involved in either protein trafficking or in the distribution of cellular structures. Required for spermatozoon maturation and fertility, and for the removal of the cytoplasmic droplet of the spermatozoon. E3 ubiquitin-protein ligases accept ubiquitin from an E2 ubiquitin-conjugating enzyme in the form of a thioester and then directly transfer it to targeted substrates. The protein is Probable E3 ubiquitin-protein ligase HERC4 (HERC4) of Homo sapiens (Human).